Here is a 272-residue protein sequence, read N- to C-terminus: Putative pyruvate, phosphate dikinase regulatory protein (272 aa).

154–161 (GVSRTSKS) provides a ligand contact to ADP.

It belongs to the pyruvate, phosphate/water dikinase regulatory protein family. PDRP subfamily.

The enzyme catalyses N(tele)-phospho-L-histidyl/L-threonyl-[pyruvate, phosphate dikinase] + ADP = N(tele)-phospho-L-histidyl/O-phospho-L-threonyl-[pyruvate, phosphate dikinase] + AMP + H(+). The catalysed reaction is N(tele)-phospho-L-histidyl/O-phospho-L-threonyl-[pyruvate, phosphate dikinase] + phosphate + H(+) = N(tele)-phospho-L-histidyl/L-threonyl-[pyruvate, phosphate dikinase] + diphosphate. Functionally, bifunctional serine/threonine kinase and phosphorylase involved in the regulation of the pyruvate, phosphate dikinase (PPDK) by catalyzing its phosphorylation/dephosphorylation. The sequence is that of Putative pyruvate, phosphate dikinase regulatory protein from Wolbachia pipientis subsp. Culex pipiens (strain wPip).